A 253-amino-acid chain; its full sequence is MLKFVILLSAVACALGGTIPEGLLPQLDGRIVGGTATTISSFPWQISLQRSGSHSCGGSIYTDRVIVTAAHCLQSVSASSLQIRAGSSYWSSGGVTVKVSSFKNHEGYNPNTMVNDIAVIRLSSSLGFSSTIKSISLASSNPANGAAASVSGWGTQSSGSSSIPSQLQYVNVNIVSQSKCASSAYGYGSEIRNTMICAAASGKDACQGDSGGPLVSGGVLVGVVSWGYGCAYSNYPGVYASVADLRSWVINNA.

A signal peptide spans 1-22 (MLKFVILLSAVACALGGTIPEG). Positions 23–30 (LLPQLDGR) are cleaved as a propeptide — activation peptide. In terms of domain architecture, Peptidase S1 spans 31–253 (IVGGTATTIS…DLRSWVINNA (223 aa)). A disulfide bond links cysteine 56 and cysteine 72. Active-site charge relay system residues include histidine 71 and aspartate 116. 2 disulfide bridges follow: cysteine 180-cysteine 197 and cysteine 206-cysteine 230. Residue serine 210 is the Charge relay system of the active site.

The protein belongs to the peptidase S1 family.

The protein resides in the secreted. Its subcellular location is the extracellular space. It carries out the reaction Preferential cleavage: Arg-|-Xaa, Lys-|-Xaa.. The sequence is that of Trypsin beta (betaTry) from Drosophila erecta (Fruit fly).